The primary structure comprises 324 residues: HSF-like protein (324 aa).

The N-terminal stretch at Met1 to Ser19 is a signal peptide. 2 Cystatin fetuin-A-type domains span residues Gln21–Ser130 and Arg141–Val254. Intrachain disulfides connect Cys28-Cys315, Cys85-Cys96, Cys110-Cys129, Cys143-Cys146, Cys205-Cys217, and Cys230-Cys253. An N-linked (GlcNAc...) asparagine glycan is attached at Asn95. Asn204 is a glycosylation site (N-linked (GlcNAc...) asparagine). Asn282 carries an N-linked (GlcNAc...) asparagine glycan.

It belongs to the fetuin family. In terms of assembly, homodimer. As to expression, expressed by the liver.

Its subcellular location is the secreted. May not have antihemorrhagic activity. The protein is HSF-like protein of Protobothrops flavoviridis (Habu).